The chain runs to 356 residues: UDP-N-acetylglucosamine--N-acetylmuramyl-(pentapeptide) pyrophosphoryl-undecaprenol N-acetylglucosamine transferase (356 aa).

Residues Ser195 and Gln287 each coordinate UDP-N-acetyl-alpha-D-glucosamine.

This sequence belongs to the glycosyltransferase 28 family. MurG subfamily.

The protein localises to the cell membrane. It carries out the reaction Mur2Ac(oyl-L-Ala-gamma-D-Glu-L-Lys-D-Ala-D-Ala)-di-trans,octa-cis-undecaprenyl diphosphate + UDP-N-acetyl-alpha-D-glucosamine = beta-D-GlcNAc-(1-&gt;4)-Mur2Ac(oyl-L-Ala-gamma-D-Glu-L-Lys-D-Ala-D-Ala)-di-trans,octa-cis-undecaprenyl diphosphate + UDP + H(+). The protein operates within cell wall biogenesis; peptidoglycan biosynthesis. In terms of biological role, cell wall formation. Catalyzes the transfer of a GlcNAc subunit on undecaprenyl-pyrophosphoryl-MurNAc-pentapeptide (lipid intermediate I) to form undecaprenyl-pyrophosphoryl-MurNAc-(pentapeptide)GlcNAc (lipid intermediate II). In Streptococcus gordonii (strain Challis / ATCC 35105 / BCRC 15272 / CH1 / DL1 / V288), this protein is UDP-N-acetylglucosamine--N-acetylmuramyl-(pentapeptide) pyrophosphoryl-undecaprenol N-acetylglucosamine transferase.